The chain runs to 483 residues: Glutamyl-tRNA(Gln) amidotransferase subunit A (483 aa).

Active-site charge relay system residues include Lys76 and Ser151. Catalysis depends on Ser175, which acts as the Acyl-ester intermediate.

This sequence belongs to the amidase family. GatA subfamily. Heterotrimer of A, B and C subunits.

It carries out the reaction L-glutamyl-tRNA(Gln) + L-glutamine + ATP + H2O = L-glutaminyl-tRNA(Gln) + L-glutamate + ADP + phosphate + H(+). Its function is as follows. Allows the formation of correctly charged Gln-tRNA(Gln) through the transamidation of misacylated Glu-tRNA(Gln) in organisms which lack glutaminyl-tRNA synthetase. The reaction takes place in the presence of glutamine and ATP through an activated gamma-phospho-Glu-tRNA(Gln). The protein is Glutamyl-tRNA(Gln) amidotransferase subunit A of Nitrosococcus oceani (strain ATCC 19707 / BCRC 17464 / JCM 30415 / NCIMB 11848 / C-107).